The sequence spans 462 residues: Proline--tRNA ligase (462 aa).

It belongs to the class-II aminoacyl-tRNA synthetase family. ProS type 3 subfamily. Homodimer.

It localises to the cytoplasm. It carries out the reaction tRNA(Pro) + L-proline + ATP = L-prolyl-tRNA(Pro) + AMP + diphosphate. Catalyzes the attachment of proline to tRNA(Pro) in a two-step reaction: proline is first activated by ATP to form Pro-AMP and then transferred to the acceptor end of tRNA(Pro). This is Proline--tRNA ligase from Thermoplasma volcanium (strain ATCC 51530 / DSM 4299 / JCM 9571 / NBRC 15438 / GSS1).